A 142-amino-acid polypeptide reads, in one-letter code: Hemoglobin subunit beta-2 (142 aa).

The Globin domain maps to 2 to 142 (SLTDEEKHLI…VTEALSCQYH (141 aa)). Positions 59 and 88 each coordinate heme b.

This sequence belongs to the globin family. As to quaternary structure, heterotetramer of two alpha chains and two beta chains. In terms of tissue distribution, red blood cells.

Its function is as follows. Involved in oxygen transport from the lung to the various peripheral tissues. This is Hemoglobin subunit beta-2 (HBB2) from Torpedo marmorata (Marbled electric ray).